A 359-amino-acid chain; its full sequence is Cytohesin-interacting protein (359 aa).

Residues 77–166 (LVTVEKQDNE…LLTIETLNGT (90 aa)) form the PDZ domain. An interaction with CYTH1 region spans residues 166-188 (TMILKRTELEAKLQVLKQTLKQK). Residues 166 to 188 (TMILKRTELEAKLQVLKQTLKQK) adopt a coiled-coil conformation.

As to quaternary structure, interacts with CYTH1 and SNX27. In terms of tissue distribution, expressed in lymph nodes, thymus, spleen, lung, peripheral blood leukocytes and bone marrow.

It is found in the cytoplasm. It localises to the early endosome. By its binding to cytohesin-1 (CYTH1), it modifies activation of ARFs by CYTH1 and its precise function may be to sequester CYTH1 in the cytoplasm. This Homo sapiens (Human) protein is Cytohesin-interacting protein (CYTIP).